A 317-amino-acid chain; its full sequence is Acetyl-coenzyme A carboxylase carboxyl transferase subunit alpha (317 aa).

A CoA carboxyltransferase C-terminal domain is found at 39–293 (RLESKAAAAL…GDALAEALTG (255 aa)).

Belongs to the AccA family. In terms of assembly, acetyl-CoA carboxylase is a heterohexamer composed of biotin carboxyl carrier protein (AccB), biotin carboxylase (AccC) and two subunits each of ACCase subunit alpha (AccA) and ACCase subunit beta (AccD).

It localises to the cytoplasm. It carries out the reaction N(6)-carboxybiotinyl-L-lysyl-[protein] + acetyl-CoA = N(6)-biotinyl-L-lysyl-[protein] + malonyl-CoA. The protein operates within lipid metabolism; malonyl-CoA biosynthesis; malonyl-CoA from acetyl-CoA: step 1/1. In terms of biological role, component of the acetyl coenzyme A carboxylase (ACC) complex. First, biotin carboxylase catalyzes the carboxylation of biotin on its carrier protein (BCCP) and then the CO(2) group is transferred by the carboxyltransferase to acetyl-CoA to form malonyl-CoA. The chain is Acetyl-coenzyme A carboxylase carboxyl transferase subunit alpha from Methylobacterium nodulans (strain LMG 21967 / CNCM I-2342 / ORS 2060).